The following is a 125-amino-acid chain: MMCNLLLSCSVLLLSCSHLLAHPVTDTADMTYSGPDSVEEAGGVNPDDFSVSDLNEHLQRAAVAGYSPLFSQENIKVPGQIPKEALRELLLEKPYRLIPPRGLWGSRRQFRKRGGGADCFWKYCI.

The signal sequence occupies residues 1–21 (MMCNLLLSCSVLLLSCSHLLA). The propeptide occupies 109–111 (QFR). A disulfide bridge links Cys119 with Cys124.

This sequence belongs to the urotensin-2 family.

The protein resides in the secreted. Functionally, urotensin is found in the teleost caudal neurosecretory system. It has a suggested role in osmoregulation and as a corticotropin-releasing factor. The non-hormonal portion of this precursor may be a urotensin binding protein, urophysin. This Cyprinus carpio (Common carp) protein is Prepro-urotensin II-gamma.